Consider the following 258-residue polypeptide: MTSVNAVLLGLVQAAGEFLPISSSAHLVLMPWLLGMEYQGLTYDIFLHLATLIAVLIYFRKEWFTIIKDGLTKPKTEEGKILWLLVLGTIPAAICGVLFEDWIETVFRSPFVIAAALIVFAVILHLADKRAGQKDVALNVKTVLIIGCAQALALMPGVSRSGITITAALFLGFSRAESAKISFLLSTPIIAGAAVLKLKDINPADINAAFIAGFLTAAIFGWLFIKFLMNYVQKHNFNIFVVYRIALGVIIIITALMK.

8 helical membrane passes run 14-34 (AAGE…PWLL), 39-59 (QGLT…LIYF), 79-99 (GKIL…GVLF), 106-126 (VFRS…ILHL), 136-156 (VALN…ALMP), 176-196 (AESA…AAVL), 209-229 (AFIA…KFLM), and 237-257 (FNIF…TALM).

Belongs to the UppP family.

Its subcellular location is the cell membrane. It catalyses the reaction di-trans,octa-cis-undecaprenyl diphosphate + H2O = di-trans,octa-cis-undecaprenyl phosphate + phosphate + H(+). Catalyzes the dephosphorylation of undecaprenyl diphosphate (UPP). Confers resistance to bacitracin. This chain is Undecaprenyl-diphosphatase, found in Elusimicrobium minutum (strain Pei191).